Reading from the N-terminus, the 467-residue chain is Interleukin-6 receptor subunit alpha (467 aa).

An N-terminal signal peptide occupies residues 1–19 (MLAVGCALLTALLAAPGMA). An Ig-like C2-type domain is found at 20 to 112 (LAPRGCSKLE…AGSVRLLVDA (93 aa)). The Extracellular portion of the chain corresponds to 20-365 (LAPRGCSKLE…VQDSASVPLP (346 aa)). Disulfide bonds link Cys-25-Cys-193, Cys-47-Cys-96, Cys-121-Cys-132, and Cys-165-Cys-176. 2 N-linked (GlcNAc...) asparagine glycosylation sites follow: Asn-55 and Asn-93. 2 Fibronectin type-III domains span residues 113–217 (PPEE…LQPD) and 218–316 (PPVN…IPWT). Asn-221 and Asn-245 each carry an N-linked (GlcNAc...) asparagine glycan. Residues 303-307 (WSEWS) carry the WSXWS motif motif. The disordered stretch occupies residues 315 to 357 (WTESRSSPAETELPLSTQAPTTNEDDEDISSKESANATSLPVQ). Composition is skewed to polar residues over residues 317–336 (ESRS…APTT) and 346–357 (KESANATSLPVQ). Asn-350 is a glycosylation site (N-linked (GlcNAc...) asparagine). Residue Thr-352 is glycosylated (O-linked (GlcNAc) threonine). Residues 366 to 386 (TFLVAGGSLAFGTLLCIGIIL) traverse the membrane as a helical segment. Residues 387 to 467 (RFKKTGQLQA…VSNRDYFFPR (81 aa)) lie on the Cytoplasmic side of the membrane. The interval 428-467 (ISPPVSPNSLGDNTSRNSRPEARGPQSPYDVSNRDYFFPR) is disordered.

The protein belongs to the type I cytokine receptor family. Type 3 subfamily. Component of a hexamer of two molecules each of IL6, IL6R and IL6ST; first binds to IL6 to associate with the signaling subunit IL6ST. Interacts (via N-terminal ectodomain) with SORL1; this interaction may affect IL6-binding to IL6R, hence decrease IL6 'classic-signaling'. As to quaternary structure, also interacts with SORL1; this interaction leads to soluble IL6R internalization. May form a trimeric complex with the soluble SORL1 ectodomain and circulating IL6 receptor; this interaction might stabilize circulating IL6, hence promote IL6 'trans-signaling'. In terms of processing, a short soluble form is also released from the membrane by proteolysis. The sIL6R is formed by limited proteolysis of membrane-bound receptors, a process referred to as ectodomain shedding. mIL6R is cleaved by the proteases ADAM10 and ADAM17. Post-translationally, glycosylated. Glycosylation is dispensable for transport, signaling, and cell-surface turnover. Glycosylation at Asn-55 is a protease-regulatory exosite. Glycosylation is required for ADAM17-mediated proteolysis. Expressed in liver.

Its subcellular location is the cell membrane. The protein resides in the secreted. With respect to regulation, classic and trans-signaling are both inhibited by tocilizumab, a humanized monoclonal antibody that blocks interleukin IL6R signaling. Functionally, part of the receptor for interleukin 6. Binds to IL6 with low affinity, but does not transduce a signal. Signal activation necessitate an association with IL6ST. Activation leads to the regulation of the immune response, acute-phase reactions and hematopoiesis. The interaction with membrane-bound IL6R and IL6ST stimulates 'classic signaling', the restricted expression of the IL6R limits classic IL6 signaling to only a few tissues such as the liver and some cells of the immune system. Whereas the binding of IL6 and soluble IL6R to IL6ST stimulates 'trans-signaling'. Alternatively, 'cluster signaling' occurs when membrane-bound IL6:IL6R complexes on transmitter cells activate IL6ST receptors on neighboring receiver cells. Signaling via the membrane-bound IL6R is mostly regenerative and anti-inflammatory. Drives naive CD4(+) T cells to the Th17 lineage, through 'cluster signaling' by dendritic cells. In terms of biological role, soluble form of IL6 receptor (sIL6R) that acts as an agonist of IL6 activity. The IL6:sIL6R complex (hyper-IL6) binds to IL6ST/gp130 on cell surfaces and induces signaling also on cells that do not express membrane-bound IL6R in a process called IL6 'trans-signaling'. sIL6R is causative for the pro-inflammatory properties of IL6 and an important player in the development of chronic inflammatory diseases. In complex with IL6, is required for induction of VEGF production. Plays a protective role during liver injury, being required for maintenance of tissue regeneration. 'Trans-signaling' in central nervous system regulates energy and glucose homeostasis. This is Interleukin-6 receptor subunit alpha (IL6R) from Sus scrofa (Pig).